Here is a 245-residue protein sequence, read N- to C-terminus: Small ribosomal subunit protein uS3 (245 aa).

In terms of domain architecture, KH type-2 spans 39–111 (IRNFINKNYS…EVFFNVIEIK (73 aa)).

This sequence belongs to the universal ribosomal protein uS3 family. In terms of assembly, part of the 30S ribosomal subunit. Forms a tight complex with proteins S10 and S14.

Its function is as follows. Binds the lower part of the 30S subunit head. Binds mRNA in the 70S ribosome, positioning it for translation. This Phytoplasma mali (strain AT) protein is Small ribosomal subunit protein uS3.